The primary structure comprises 261 residues: Protein unc-50 homolog (261 aa).

Helical transmembrane passes span 37 to 57 (IFHY…YLCF), 82 to 102 (AFAV…AITF), 113 to 133 (VMFW…ATIG), 166 to 186 (SFFP…PILL), 190 to 210 (LFAA…YYYV), and 225 to 245 (VVFL…VVMG).

The protein belongs to the unc-50 family.

The protein localises to the membrane. In Dictyostelium discoideum (Social amoeba), this protein is Protein unc-50 homolog.